An 87-amino-acid chain; its full sequence is UPF0297 protein Sca_1229 (87 aa).

The protein belongs to the UPF0297 family.

The protein is UPF0297 protein Sca_1229 of Staphylococcus carnosus (strain TM300).